A 333-amino-acid chain; its full sequence is NADH dehydrogenase (ubiquinone) complex I, assembly factor 6 (333 aa).

The transit peptide at 1 to 44 (MATSMLGSVRGPRPFGLANLFHRQPPRDAWERVRRLPGPSAVRR) directs the protein to the mitochondrion.

This sequence belongs to the NDUFAF6 family.

It localises to the mitochondrion inner membrane. Involved in the assembly of mitochondrial NADH:ubiquinone oxidoreductase complex (complex I) at early stages. May play a role in the biogenesis of complex I subunit MT-ND1. In Mus musculus (Mouse), this protein is NADH dehydrogenase (ubiquinone) complex I, assembly factor 6 (Ndufaf6).